The sequence spans 290 residues: RIO-type serine/threonine-protein kinase Rio1 (290 aa).

Positions 76–290 constitute a Protein kinase domain; the sequence is TEYIGIVNSG…PIDEAMIKQL (215 aa). Residues 82–90 and Lys103 each bind ATP; that span reads VNSGKEAVV. Asp214 acts as the Proton acceptor in catalysis. Residues Asn219 and Asp231 each coordinate Mg(2+). Asp231 acts as the 4-aspartylphosphate intermediate in catalysis.

It belongs to the protein kinase superfamily. RIO-type Ser/Thr kinase family.

It catalyses the reaction L-seryl-[protein] + ATP = O-phospho-L-seryl-[protein] + ADP + H(+). It carries out the reaction L-threonyl-[protein] + ATP = O-phospho-L-threonyl-[protein] + ADP + H(+). The catalysed reaction is ATP + H2O = ADP + phosphate + H(+). Despite the protein kinase domain is proposed to act predominantly as an ATPase. The chain is RIO-type serine/threonine-protein kinase Rio1 (rio1) from Methanocaldococcus jannaschii (strain ATCC 43067 / DSM 2661 / JAL-1 / JCM 10045 / NBRC 100440) (Methanococcus jannaschii).